The sequence spans 556 residues: Tripartite motif-containing protein 16 (556 aa).

The disordered stretch occupies residues 1 to 60 (MAELDLIAPGPLTGVTAHPLAPLGPDPVSAIPVEKEDADPLSKSGEETQEQGHDPAELGA). Over residues 33 to 56 (VEKEDADPLSKSGEETQEQGHDPA) the composition is skewed to basic and acidic residues. 2 consecutive B box-type zinc fingers follow at residues 64–113 (EDQI…LTEP) and 117–156 (QDLRTCPAHHSPLVSFCHTHQQCICQECGEGEHRGDSTVS). Position 107 is a phosphoserine (serine 107). Coiled-coil stretches lie at residues 163–266 (NKEV…RLAA) and 312–332 (NLIQLLESYKEKLQEFSREEE). Serine 195 carries the phosphoserine modification. The region spanning 347-545 (YRTSKPEPRT…RIVDLGEEPE (199 aa)) is the B30.2/SPRY domain.

It belongs to the TRIM/RBCC family. As to quaternary structure, homodimerizes via its coiled-coil domain. Heterodimerizes with MID1, TRIM24 and PML. Interacts with Galectin-3/LGALS3 in a ULK1-dependent manner; this interaction mediates autophagy of damage endomembranes. Interacts with BECN1. Interacts with ATG16L1. Interacts with p62/SQSTM and LC3B/MAP1LC3B. Post-translationally, phosphorylated by ULK1. Auto-ubiquitinates via its B-Boxes. As to expression, widely expressed. Expressed in basal keratinocytes.

The protein localises to the cytoplasm. The catalysed reaction is S-ubiquitinyl-[E2 ubiquitin-conjugating enzyme]-L-cysteine + [acceptor protein]-L-lysine = [E2 ubiquitin-conjugating enzyme]-L-cysteine + N(6)-ubiquitinyl-[acceptor protein]-L-lysine.. E3 ubiquitin ligase that plays an essential role in the organization of autophagic response and ubiquitination upon lysosomal and phagosomal damages. Plays a role in the stress-induced biogenesis and degradation of protein aggresomes by regulating the p62-KEAP1-NRF2 signaling and particularly by modulating the ubiquitination levels and thus stability of NRF2. Acts as a scaffold protein and facilitates autophagic degradation of protein aggregates by interacting with p62/SQSTM, ATG16L1 and LC3B/MAP1LC3B. In turn, protects the cell against oxidative stress-induced cell death as a consequence of endomembrane damage. The protein is Tripartite motif-containing protein 16 (Trim16) of Mus musculus (Mouse).